A 96-amino-acid chain; its full sequence is Guanine nucleotide-binding protein alpha-9 subunit (96 aa).

The G-alpha domain maps to 2–96 (YFHSTAIILF…ISASLKMVGV (95 aa)). The interval 9-16 (ILFLNKID) is G1 motif. GTP contacts are provided by residues 13–16 (NKID) and Ala69. The interval 67-72 (TSATDT) is G2 motif.

Belongs to the G-alpha family. G proteins are composed of 3 units; alpha, beta and gamma. The alpha chain contains the guanine nucleotide binding site. In terms of tissue distribution, expressed in ASJ neurons.

Guanine nucleotide-binding proteins (G proteins) are involved as modulators or transducers in various transmembrane signaling systems. Plays a role in innate immunity and maintaining survival in response to metabolites of E.coli. This might be by regulating the expression and signaling of genes such as lys-8, ins-7 and daf-28. Has a role in lifespan to promote longevity. This is Guanine nucleotide-binding protein alpha-9 subunit from Caenorhabditis elegans.